Here is a 424-residue protein sequence, read N- to C-terminus: UPF0761 membrane protein Smlt0865 (424 aa).

Transmembrane regions (helical) follow at residues 48–68 (VFALVPLAIVVFGVLSAFPVF), 101–121 (SAGQLTAAGFIALVVSLLITL), 144–164 (FLVYWTVLTLGAMLAAASLAV), 181–201 (WLAELALRLAPILIEFVCITL), 216–236 (AVPGAILAAVILELVKWGIGA), and 251–271 (VAFVPILLLWIYLCWVAVLLG).

This sequence belongs to the UPF0761 family.

Its subcellular location is the cell inner membrane. The polypeptide is UPF0761 membrane protein Smlt0865 (Stenotrophomonas maltophilia (strain K279a)).